The following is a 501-amino-acid chain: Probable cysteine desulfurase, mitochondrial (501 aa).

Residues 172 to 173 (AT), Asn-252, Gln-280, and 300 to 302 (SAH) each bind pyridoxal 5'-phosphate. Position 303 is an N6-(pyridoxal phosphate)lysine (Lys-303). Thr-340 lines the pyridoxal 5'-phosphate pocket. Cys-425 acts as the Cysteine persulfide intermediate in catalysis. A [2Fe-2S] cluster-binding site is contributed by Cys-425.

The protein belongs to the class-V pyridoxal-phosphate-dependent aminotransferase family. NifS/IscS subfamily. It depends on pyridoxal 5'-phosphate as a cofactor.

The protein localises to the mitochondrion. The enzyme catalyses (sulfur carrier)-H + L-cysteine = (sulfur carrier)-SH + L-alanine. Functionally, catalyzes the removal of elemental sulfur from cysteine to produce alanine. It supplies the inorganic sulfur for iron-sulfur (Fe-S) clusters. Plays a role in both tRNA-processing and mitochondrial metabolism. Involved in the 2-thio-modification of both 5-carboxymethylaminomethyl-2-thiouridine in mitochondrial tRNAs and 5-methoxycarbonylmethyl-2-thiouridine (mcm5s2U) in cytoplasmic tRNAs. The protein is Probable cysteine desulfurase, mitochondrial of Schizosaccharomyces pombe (strain 972 / ATCC 24843) (Fission yeast).